The chain runs to 445 residues: Phosphoglucosamine mutase (445 aa).

The active-site Phosphoserine intermediate is Ser-104. Residues Ser-104, Asp-243, Asp-245, and Asp-247 each contribute to the Mg(2+) site. Position 104 is a phosphoserine (Ser-104).

The protein belongs to the phosphohexose mutase family. It depends on Mg(2+) as a cofactor. Activated by phosphorylation.

It catalyses the reaction alpha-D-glucosamine 1-phosphate = D-glucosamine 6-phosphate. Functionally, catalyzes the conversion of glucosamine-6-phosphate to glucosamine-1-phosphate. This is Phosphoglucosamine mutase from Neisseria subflava.